A 277-amino-acid polypeptide reads, in one-letter code: Undecaprenyl-diphosphatase 1 (277 aa).

A run of 8 helical transmembrane segments spans residues 1–21 (MSLL…FLPI), 39–58 (AGFS…VILY), 85–105 (FWFA…GILF), 113–133 (FKAP…LIII), 147–167 (MTIW…IPGL), 191–211 (SFLL…DDLI), 226–246 (ASFV…LNLV), and 251–271 (LVYF…FQDA).

Belongs to the UppP family.

Its subcellular location is the cell membrane. It catalyses the reaction di-trans,octa-cis-undecaprenyl diphosphate + H2O = di-trans,octa-cis-undecaprenyl phosphate + phosphate + H(+). Catalyzes the dephosphorylation of undecaprenyl diphosphate (UPP). Confers resistance to bacitracin. The protein is Undecaprenyl-diphosphatase 1 of Shouchella clausii (strain KSM-K16) (Alkalihalobacillus clausii).